Here is a 293-residue protein sequence, read N- to C-terminus: uncharacterized protein (293 aa).

This is an uncharacterized protein from Mycobacterium tuberculosis (strain CDC 1551 / Oshkosh).